We begin with the raw amino-acid sequence, 318 residues long: Ribose-phosphate pyrophosphokinase 2 (318 aa).

96-101 (RQDKKD) is an ATP binding site. Mg(2+) is bound by residues D128, H130, D139, and D143. Position 130 (H130) interacts with ATP. Positions 212-227 (KDRVAILVDDMADTCG) are binding of phosphoribosylpyrophosphate.

It belongs to the ribose-phosphate pyrophosphokinase family. As to quaternary structure, homodimer. The active form is probably a hexamer composed of 3 homodimers. The cofactor is Mg(2+).

The catalysed reaction is D-ribose 5-phosphate + ATP = 5-phospho-alpha-D-ribose 1-diphosphate + AMP + H(+). It functions in the pathway metabolic intermediate biosynthesis; 5-phospho-alpha-D-ribose 1-diphosphate biosynthesis; 5-phospho-alpha-D-ribose 1-diphosphate from D-ribose 5-phosphate (route I): step 1/1. Activated by magnesium and inorganic phosphate. Competitively or non-competitively inhibited by ADP, 2,3-bisphosphoglyceride or GDP. Catalyzes the synthesis of phosphoribosylpyrophosphate (PRPP) that is essential for nucleotide synthesis. This is Ribose-phosphate pyrophosphokinase 2 (Prps2) from Mus musculus (Mouse).